Reading from the N-terminus, the 281-residue chain is Histidine biosynthesis bifunctional protein hisIE, chloroplastic (281 aa).

A chloroplast-targeting transit peptide spans 1 to 50 (MAVSYNALAQSLARSSCFIPKPYSFRDTKLRSRSNVVFACNDNKNIALQA). The tract at residues 51–178 (KVDNLLDRIK…NKLALTTLYS (128 aa)) is phosphoribosyl-AMP cyclohydrolase. The segment at 179-281 (LESIISKRKE…GIEEKQNRTK (103 aa)) is phosphoribosyl-ATP pyrophosphohydrolase.

It in the N-terminal section; belongs to the PRA-CH family. The protein in the C-terminal section; belongs to the PRA-PH family. Ubiquitously expressed throughout development.

It localises to the plastid. Its subcellular location is the chloroplast. The enzyme catalyses 1-(5-phospho-beta-D-ribosyl)-ATP + H2O = 1-(5-phospho-beta-D-ribosyl)-5'-AMP + diphosphate + H(+). The catalysed reaction is 1-(5-phospho-beta-D-ribosyl)-5'-AMP + H2O = 1-(5-phospho-beta-D-ribosyl)-5-[(5-phospho-beta-D-ribosylamino)methylideneamino]imidazole-4-carboxamide. It participates in amino-acid biosynthesis; L-histidine biosynthesis; L-histidine from 5-phospho-alpha-D-ribose 1-diphosphate: step 2/9. The protein operates within amino-acid biosynthesis; L-histidine biosynthesis; L-histidine from 5-phospho-alpha-D-ribose 1-diphosphate: step 3/9. This Arabidopsis thaliana (Mouse-ear cress) protein is Histidine biosynthesis bifunctional protein hisIE, chloroplastic (HISN2).